Reading from the N-terminus, the 67-residue chain is DNA gyrase inhibitor YacG (67 aa).

Cysteine 9, cysteine 12, cysteine 28, and cysteine 32 together coordinate Zn(2+). The segment at 46–67 is disordered; the sequence is RIPSSGDLNDSDDWSEQPLDRQ.

It belongs to the DNA gyrase inhibitor YacG family. Interacts with GyrB. Zn(2+) serves as cofactor.

Inhibits all the catalytic activities of DNA gyrase by preventing its interaction with DNA. Acts by binding directly to the C-terminal domain of GyrB, which probably disrupts DNA binding by the gyrase. This Erwinia tasmaniensis (strain DSM 17950 / CFBP 7177 / CIP 109463 / NCPPB 4357 / Et1/99) protein is DNA gyrase inhibitor YacG.